The chain runs to 246 residues: ATP synthase subunit a (246 aa).

5 helical membrane passes run 34 to 54 (GQTMITTWVVMLLLIGLTFIG), 92 to 112 (WVPLIGTIFLFVLFANWLGQL), 130 to 150 (DINTTVALSLIALVSYIYAGL), 155 to 175 (FGYFKHYFESPILAAVWVLEF), and 196 to 216 (VVAVLILLVPILVPVPLMILF).

The protein belongs to the ATPase A chain family. As to quaternary structure, F-type ATPases have 2 components, CF(1) - the catalytic core - and CF(0) - the membrane proton channel. CF(1) has five subunits: alpha(3), beta(3), gamma(1), delta(1), epsilon(1). CF(0) has four main subunits: a, b, b' and c.

It localises to the cell inner membrane. Key component of the proton channel; it plays a direct role in the translocation of protons across the membrane. This chain is ATP synthase subunit a, found in Gloeobacter violaceus (strain ATCC 29082 / PCC 7421).